The following is a 242-amino-acid chain: DNA repair protein RecO (242 aa).

It belongs to the RecO family. In terms of assembly, monomer.

Involved in DNA repair and RecF pathway recombination. This Shigella flexneri protein is DNA repair protein RecO.